The sequence spans 316 residues: Glycerol-3-phosphate dehydrogenase [NAD(P)+] (316 aa).

Residues S14, F15, R35, and K109 each coordinate NADPH. Residues K109 and G137 each contribute to the sn-glycerol 3-phosphate site. A141 is an NADPH binding site. K192, D248, S258, R259, and N260 together coordinate sn-glycerol 3-phosphate. K192 acts as the Proton acceptor in catalysis. Residue R259 coordinates NADPH. 2 residues coordinate NADPH: L283 and E285.

It belongs to the NAD-dependent glycerol-3-phosphate dehydrogenase family.

It is found in the cytoplasm. The enzyme catalyses sn-glycerol 3-phosphate + NAD(+) = dihydroxyacetone phosphate + NADH + H(+). It carries out the reaction sn-glycerol 3-phosphate + NADP(+) = dihydroxyacetone phosphate + NADPH + H(+). It participates in membrane lipid metabolism; glycerophospholipid metabolism. In terms of biological role, catalyzes the reduction of the glycolytic intermediate dihydroxyacetone phosphate (DHAP) to sn-glycerol 3-phosphate (G3P), the key precursor for phospholipid synthesis. The polypeptide is Glycerol-3-phosphate dehydrogenase [NAD(P)+] (Rickettsia prowazekii (strain Madrid E)).